We begin with the raw amino-acid sequence, 488 residues long: UDP-N-acetylmuramate--L-alanine ligase (488 aa).

Position 122-128 (122-128 (GTHGKTT)) interacts with ATP.

Belongs to the MurCDEF family.

The protein localises to the cytoplasm. It carries out the reaction UDP-N-acetyl-alpha-D-muramate + L-alanine + ATP = UDP-N-acetyl-alpha-D-muramoyl-L-alanine + ADP + phosphate + H(+). It participates in cell wall biogenesis; peptidoglycan biosynthesis. Functionally, cell wall formation. The protein is UDP-N-acetylmuramate--L-alanine ligase of Mycobacterium marinum (strain ATCC BAA-535 / M).